The following is a 584-amino-acid chain: J protein JJJ2 (584 aa).

In terms of domain architecture, J spans 13–77 (TYYSILGLTS…DQKLRYDRDL (65 aa)). Positions 216 to 312 (YSEDPNSCLG…FSSGSHDSNL (97 aa)) are disordered. The residue at position 229 (Ser229) is a Phosphoserine. The span at 241–253 (QQQQQQQQQQQQQ) shows a compositional bias: low complexity. The segment covering 269-282 (KDNKESKRESRVSP) has biased composition (basic and acidic residues). The span at 299–312 (KTSTFSSGSHDSNL) shows a compositional bias: polar residues.

It is found in the cytoplasm. The protein resides in the nucleus. The protein is J protein JJJ2 (JJJ2) of Saccharomyces cerevisiae (strain YJM789) (Baker's yeast).